Here is a 109-residue protein sequence, read N- to C-terminus: Ribulose bisphosphate carboxylase small subunit (109 aa).

It belongs to the RuBisCO small chain family. Heterohexadecamer of 8 large and 8 small subunits. Forms complexes of many stoichiometries with Raf1 and RbcL.

It localises to the carboxysome. In terms of biological role, ruBisCO catalyzes two reactions: the carboxylation of D-ribulose 1,5-bisphosphate, the primary event in carbon dioxide fixation, as well as the oxidative fragmentation of the pentose substrate in the photorespiration process. Both reactions occur simultaneously and in competition at the same active site. Although the small subunit is not catalytic it is essential for maximal activity. In Nostoc sp. (strain PCC 7120 / SAG 25.82 / UTEX 2576), this protein is Ribulose bisphosphate carboxylase small subunit.